The chain runs to 125 residues: Fluoride-specific ion channel FluC (125 aa).

Helical transmembrane passes span 7-27 (FFIVGAGGFVGSVMRYLMAVV), 36-56 (GFPYATLAVNVLGSFMIGFLS), 63-83 (PYGRLFVMVGVLGGFTTFSTF), and 96-116 (FIFASLNVLLNVLLCLVGVFC). Na(+) contacts are provided by Gly-75 and Thr-78.

This sequence belongs to the fluoride channel Fluc/FEX (TC 1.A.43) family.

Its subcellular location is the cell inner membrane. It carries out the reaction fluoride(in) = fluoride(out). Its activity is regulated as follows. Na(+) is not transported, but it plays an essential structural role and its presence is essential for fluoride channel function. Its function is as follows. Fluoride-specific ion channel. Important for reducing fluoride concentration in the cell, thus reducing its toxicity. This Elusimicrobium minutum (strain Pei191) protein is Fluoride-specific ion channel FluC.